The sequence spans 493 residues: Ribose import ATP-binding protein RbsA (493 aa).

2 ABC transporter domains span residues 3 to 239 (IEMK…VGRE) and 246 to 493 (KRTP…TGGR). Position 35 to 42 (35 to 42 (GENGAGKS)) interacts with ATP.

This sequence belongs to the ABC transporter superfamily. Ribose importer (TC 3.A.1.2.1) family. As to quaternary structure, the complex is composed of an ATP-binding protein (RbsA), two transmembrane proteins (RbsC) and a solute-binding protein (RbsB).

It localises to the cell membrane. It catalyses the reaction D-ribose(out) + ATP + H2O = D-ribose(in) + ADP + phosphate + H(+). Functionally, part of the ABC transporter complex RbsABC involved in ribose import. Responsible for energy coupling to the transport system. The protein is Ribose import ATP-binding protein RbsA of Bacillus subtilis (strain 168).